We begin with the raw amino-acid sequence, 708 residues long: O-antigen chain terminator bifunctional methyltransferase/kinase WbdD (708 aa).

Residues 1 to 210 (MTKDLNTLVS…VPRPMYLVSN (210 aa)) are methyltransferase. S-adenosyl-L-methionine is bound by residues 16–17 (YQ), R36, G61, 82–87 (DFQQEN), 108–111 (GRIE), and L128. The segment at 211–459 (HRVLINDFNQ…AKLPSAEQQR (249 aa)) is kinase. Residues P229, H237, 241-243 (RRY), K252, E274, 309-311 (EKL), M358, and D369 contribute to the ATP site. Positions 485–594 (AGSEALRGQI…EIEKIHRSRS (110 aa)) form a coiled coil. Residues 601–669 (YRYLGLQIHL…RLYRRMNPLP (69 aa)) form a required for membrane-binding region. The segment at 687-708 (VMHPELLPPEVYEIYLKLTKNK) is required for localizing WbdA to the membrane.

Belongs to the WbdD family. In terms of assembly, interacts with WbdA.

It is found in the cell inner membrane. The catalysed reaction is 3-O-phospho-alpha-D-Man-(1-&gt;2)-alpha-D-Man-(1-&gt;2)-[alpha-D-Man-(1-&gt;3)-alpha-D-Man-(1-&gt;3)-alpha-D-Man-(1-&gt;2)-alpha-D-Man-(1-&gt;2)](n)-alpha-D-Man-(1-&gt;3)-alpha-D-Man-(1-&gt;3)-alpha-D-Man-(1-&gt;3)-alpha-D-GlcNAc-di-trans,octa-cis-undecaprenyl diphosphate + S-adenosyl-L-methionine = 3-O-methylphospho-alpha-D-Man-(1-&gt;2)-alpha-D-Man-(1-&gt;2)-[alpha-D-Man-(1-&gt;3)-alpha-D-Man-(1-&gt;3)-alpha-D-Man-(1-&gt;2)-alpha-D-Man-(1-&gt;2)](n)-alpha-D-Man-(1-&gt;3)-alpha-D-Man-(1-&gt;3)-alpha-D-Man-(1-&gt;3)-alpha-D-GlcNAc-di-trans,octa-cis-undecaprenyl diphosphate + S-adenosyl-L-homocysteine. It carries out the reaction alpha-D-Man-(1-&gt;2)-alpha-D-Man-(1-&gt;2)-[alpha-D-Man-(1-&gt;3)-alpha-D-Man-(1-&gt;3)-alpha-D-Man-(1-&gt;2)-alpha-D-Man-(1-&gt;2)](n)-alpha-D-Man-(1-&gt;3)-alpha-D-Man-(1-&gt;3)-alpha-D-Man-(1-&gt;3)-alpha-D-GlcNAc-di-trans,octa-cis-undecaprenyl diphosphate + ATP = 3-O-phospho-alpha-D-Man-(1-&gt;2)-alpha-D-Man-(1-&gt;2)-[alpha-D-Man-(1-&gt;3)-alpha-D-Man-(1-&gt;3)-alpha-D-Man-(1-&gt;2)-alpha-D-Man-(1-&gt;2)](n)-alpha-D-Man-(1-&gt;3)-alpha-D-Man-(1-&gt;3)-alpha-D-Man-(1-&gt;3)-alpha-D-GlcNAc-di-trans,octa-cis-undecaprenyl diphosphate + ADP + H(+). The protein operates within bacterial outer membrane biogenesis; LPS O-antigen biosynthesis. In terms of biological role, regulates the length of the LPS O-antigen polysaccharide chain. Stops the polymerization of the chain by phosphorylating and then methylating the phosphate on the terminal sugar. This terminal modification is essential for export of the O-antigen across the inner membrane. WbdD is also required for correct localization of the WbdA mannosyltransferase. This Escherichia coli protein is O-antigen chain terminator bifunctional methyltransferase/kinase WbdD.